We begin with the raw amino-acid sequence, 427 residues long: Transcobalamin-2 (427 aa).

The signal sequence occupies residues 1 to 18; sequence MELLKALLLLSGVLGALA. 3 disulfides stabilise this stretch: Cys-21-Cys-268, Cys-116-Cys-310, and Cys-165-Cys-208. Cob(II)alamin-binding positions include 152–156, His-193, 193–197, Asn-245, Ser-248, Gln-292, and 395–397; these read TSYYQ, HLSVD, and WQL.

It belongs to the eukaryotic cobalamin transport proteins family. As to quaternary structure, interacts with CD320 (via LDL-receptor class A domains).

The protein resides in the secreted. Primary vitamin B12-binding and transport protein. Delivers cobalamin to cells. In Rattus norvegicus (Rat), this protein is Transcobalamin-2 (Tcn2).